The following is a 384-amino-acid chain: Outer membrane protein assembly factor BamB (384 aa).

Positions 1–16 (MKIRILVLILCALTQG) are cleaved as a signal peptide. A lipid anchor (N-palmitoyl cysteine) is attached at cysteine 17. The S-diacylglycerol cysteine moiety is linked to residue cysteine 17.

The protein belongs to the BamB family. As to quaternary structure, part of the Bam complex.

The protein localises to the cell outer membrane. Part of the outer membrane protein assembly complex, which is involved in assembly and insertion of beta-barrel proteins into the outer membrane. This Legionella pneumophila (strain Paris) protein is Outer membrane protein assembly factor BamB.